The sequence spans 78 residues: Exodeoxyribonuclease 7 small subunit (78 aa).

The protein belongs to the XseB family. In terms of assembly, heterooligomer composed of large and small subunits.

The protein localises to the cytoplasm. The catalysed reaction is Exonucleolytic cleavage in either 5'- to 3'- or 3'- to 5'-direction to yield nucleoside 5'-phosphates.. Bidirectionally degrades single-stranded DNA into large acid-insoluble oligonucleotides, which are then degraded further into small acid-soluble oligonucleotides. The chain is Exodeoxyribonuclease 7 small subunit from Synechococcus sp. (strain JA-2-3B'a(2-13)) (Cyanobacteria bacterium Yellowstone B-Prime).